The chain runs to 511 residues: 2-isopropylmalate synthase (511 aa).

The Pyruvate carboxyltransferase domain maps to 5–267; the sequence is IQIFDTTLRD…ESQINLEETK (263 aa). Residues D14, H202, H204, and N238 each contribute to the Mn(2+) site. Residues 391 to 511 form a regulatory domain region; it reads QLDNLQLQYV…EYELKEGIRT (121 aa).

The protein belongs to the alpha-IPM synthase/homocitrate synthase family. LeuA type 1 subfamily. As to quaternary structure, homodimer. The cofactor is Mn(2+).

The protein resides in the cytoplasm. The enzyme catalyses 3-methyl-2-oxobutanoate + acetyl-CoA + H2O = (2S)-2-isopropylmalate + CoA + H(+). It functions in the pathway amino-acid biosynthesis; L-leucine biosynthesis; L-leucine from 3-methyl-2-oxobutanoate: step 1/4. In terms of biological role, catalyzes the condensation of the acetyl group of acetyl-CoA with 3-methyl-2-oxobutanoate (2-ketoisovalerate) to form 3-carboxy-3-hydroxy-4-methylpentanoate (2-isopropylmalate). In Staphylococcus epidermidis (strain ATCC 35984 / DSM 28319 / BCRC 17069 / CCUG 31568 / BM 3577 / RP62A), this protein is 2-isopropylmalate synthase.